The chain runs to 315 residues: MSNTEERCDLSSSRDCPERHEHLLQRVTARAAEIGGGITVSRLMPSRQRRMIGAWCFLDHAGPAEFEPGGGLAVGPHPHIGLQTFTWMIQGEALHRDSLGNVQVIRPGQVNLMTAGHGIAHTEESLPDERHAHAAQLWIALPYEQRDIAPAFDHHPDLPRWQEQGVTFTLLAGALAGRQAPCRLYSPLLGADLACHDASTLQLTLDPHFEYGLLPLEGGLEVGGEHFAVNELAYLGDGRDGLQLQLDPGARVLLLGGAPFGAEIFMWWNFVGHSKGEIARAQKAWEEGDARFGRLDALEGPRLSAPPIPWKIDAE.

A divalent metal cation is bound by residues His-77, His-79, His-121, and Glu-123.

It belongs to the pirin family. A divalent metal cation is required as a cofactor.

The enzyme catalyses quercetin + O2 = 2-(3,4-dihydroxybenzoyloxy)-4,6-dihydroxybenzoate + CO. Its pathway is flavonoid metabolism; quercetin degradation. Its function is as follows. Putative quercetin 2,3-dioxygenase. The protein is Putative quercetin 2,3-dioxygenase PA1205 of Pseudomonas aeruginosa (strain ATCC 15692 / DSM 22644 / CIP 104116 / JCM 14847 / LMG 12228 / 1C / PRS 101 / PAO1).